The primary structure comprises 457 residues: Transcription factor PCF7 (457 aa).

The stretch at 58–84 forms a coiled coil; that stretch reads STLHYLLQEKERAQQAHEQLQIYQQQQ. A disordered region spans residues 95-119; the sequence is RQPASRGPGGGGGGGDGGGSSGEST. Over residues 101-115 the composition is skewed to gly residues; sequence GPGGGGGGGDGGGSS. The TCP domain occupies 140–198; it reads RKDRHSKVCTARGLRDRRVRLAAHTAIRFYDVQDRLGYDRPSKAVDWLMRNAKAAIDEL. Disordered stretches follow at residues 199-231 and 263-299; these read PDRA…GFGN and KSLF…SNQQ. Low complexity-rich tracts occupy residues 210 to 225 and 268 to 278; these read AAST…ATST and SSSTASGAASA.

Forms homodimers and heterodimers.

The protein resides in the nucleus. Functionally, transcription activator. Binds the promoter core sequence 5'-GGNCC-3'. This is Transcription factor PCF7 (PCF7) from Oryza sativa subsp. japonica (Rice).